The following is an 80-amino-acid chain: Exodeoxyribonuclease 7 small subunit (80 aa).

Belongs to the XseB family. In terms of assembly, heterooligomer composed of large and small subunits.

It localises to the cytoplasm. The enzyme catalyses Exonucleolytic cleavage in either 5'- to 3'- or 3'- to 5'-direction to yield nucleoside 5'-phosphates.. Its function is as follows. Bidirectionally degrades single-stranded DNA into large acid-insoluble oligonucleotides, which are then degraded further into small acid-soluble oligonucleotides. This Vibrio cholerae serotype O1 (strain ATCC 39541 / Classical Ogawa 395 / O395) protein is Exodeoxyribonuclease 7 small subunit.